The chain runs to 727 residues: Telomere repeats-binding bouquet formation protein 1 (727 aa).

ARM repeat units lie at residues 101–144 (ELFE…RETG) and 339–382 (NGLP…GEYP). A coiled-coil region spans residues 398 to 446 (ENNLEEHWRKAKEILHRIEQLEREGNEEEIQRENYQDNISSMNISIQNT). The segment covering 457–468 (RGSKAEDEDKSH) has biased composition (basic and acidic residues). The disordered stretch occupies residues 457 to 493 (RGSKAEDEDKSHSRQLQSYKSHGVMSKACTNDDQMKT). The tract at residues 523–662 (QNLHEETTFE…QRLSNESTTP (140 aa)) is interaction with TERF1. Residue Thr-648 is modified to Phosphothreonine. Residues 666–719 (KKRRIRKNFTEEEVNYLFNGVKKMGNHWNSILWSFPFQQGRKAVDLAHKYHKLT) form the Myb-like domain.

Belongs to the TERB1 family. Component of the MAJIN-TERB1-TERB2 complex, composed of MAJIN, TERB1 and TERB2. Interacts with TERF1, STAG3 and SUN1. Interacts (via Myb-like domain) with the cohesin complex; probably mediated via interaction with STAG3. Post-translationally, phosphorylated by CDK. Phosphorylation by CDK takes place in late prophase when the cap exchange is prominent. is important for the stabilization of telomere attachment but dispenable for the cap exchange.

Its subcellular location is the chromosome. The protein localises to the telomere. It is found in the nucleus inner membrane. Meiosis-specific telomere-associated protein involved in meiotic telomere attachment to the nucleus inner membrane, a crucial step for homologous pairing and synapsis. Component of the MAJIN-TERB1-TERB2 complex, which promotes telomere cap exchange by mediating attachment of telomeric DNA to the inner nuclear membrane and replacement of the protective cap of telomeric chromosomes: in early meiosis, the MAJIN-TERB1-TERB2 complex associates with telomeric DNA and the shelterin/telosome complex. During prophase, the complex matures and promotes release of the shelterin/telosome complex from telomeric DNA. In the MAJIN-TERB1-TERB2 complex, TERB1 probably mediates association with the shelterin/telosome complex via interaction with TERF1, promoting priming telomeric DNA attachment'. Promotes telomere association with the nuclear envelope and deposition of the SUN-KASH/LINC complex. Also recruits cohesin to telomeres to develop structural rigidity. The protein is Telomere repeats-binding bouquet formation protein 1 of Homo sapiens (Human).